The following is a 104-amino-acid chain: SOSS complex subunit C (104 aa).

The protein belongs to the SOSS-C family. In terms of assembly, belongs to the multiprotein complex Integrator. Component of the SOSS complex, composed of SOSS-B (SOSS-B1/NABP2 or SOSS-B2/NABP1), SOSS-A/INTS3 and SOSS-C/INIP.

Its subcellular location is the nucleus. Functionally, component of the SOSS complex, a multiprotein complex that functions downstream of the MRN complex to promote DNA repair and G2/M checkpoint. The SOSS complex associates with single-stranded DNA at DNA lesions and influences diverse endpoints in the cellular DNA damage response including cell-cycle checkpoint activation, recombinational repair and maintenance of genomic stability. Required for efficient homologous recombination-dependent repair of double-strand breaks (DSBs). This Taeniopygia guttata (Zebra finch) protein is SOSS complex subunit C (INIP).